A 271-amino-acid polypeptide reads, in one-letter code: MSSLFISLPWVAFIWLALLGAVGGARVQGPMRGSAALTCAITPRADIVSVTWQKRQLPGPVNVATYSHSYGVVVQTQYRHKANITCPGLWNSTLVIHNLAVDDEGCYLCIFNSFGGRQVSCTACLEVTSPPTGHVQVNSTEDADTVTCLATGRPPPNVTWAAPWNNASSTQEQFTDSDGLTVAWRTVRLPRGDNTTPSEGICLITWGNESISIPASIQGPLAHDLPAAQGTLAGVAITLVGLFGIFALHHCRRKQGGASPTSDDMDPLSTQ.

The first 24 residues, 1-24 (MSSLFISLPWVAFIWLALLGAVGG), serve as a signal peptide directing secretion. The Extracellular segment spans residues 25 to 227 (ARVQGPMRGS…QGPLAHDLPA (203 aa)). The Ig-like V-type domain maps to 26–129 (RVQGPMRGSA…SCTACLEVTS (104 aa)). The cysteines at positions 39 and 109 are disulfide-linked. Asn-83, Asn-91, Asn-138, Asn-157, Asn-166, and Asn-208 each carry an N-linked (GlcNAc...) asparagine; by host glycan. The Ig-like C2-type domain occupies 130–220 (PPTGHVQVNS…ISIPASIQGP (91 aa)). An intrachain disulfide couples Cys-148 to Cys-202. A helical membrane pass occupies residues 228-248 (AQGTLAGVAITLVGLFGIFAL). At 249-271 (HHCRRKQGGASPTSDDMDPLSTQ) the chain is on the cytoplasmic side.

Interacts with human CD200R1. N-glycosylated.

The protein resides in the host cell membrane. Its function is as follows. Dramatically stimulates primary monocytes, macrophages, and dendritic cells to produce the inflammatory cytokines interleukin 1-beta, IL-6, monocyte chemoattractant protein 1, and TNF-alpha. The induction of inflammatory cytokine production potentially promotes the cytokine-mediated angiogenic proliferation of KSHV-infected cells. The chain is OX-2 membrane glycoprotein homolog (K14) from Human herpesvirus 8 type P (isolate GK18) (HHV-8).